The primary structure comprises 430 residues: Histidine--tRNA ligase (430 aa).

Belongs to the class-II aminoacyl-tRNA synthetase family. As to quaternary structure, homodimer.

It is found in the cytoplasm. It catalyses the reaction tRNA(His) + L-histidine + ATP = L-histidyl-tRNA(His) + AMP + diphosphate + H(+). The protein is Histidine--tRNA ligase of Acinetobacter baylyi (strain ATCC 33305 / BD413 / ADP1).